The primary structure comprises 427 residues: uncharacterized protein (427 aa).

The protein belongs to the MG032/MG096/MG288 family.

This is an uncharacterized protein from Mycoplasma pneumoniae (strain ATCC 29342 / M129 / Subtype 1) (Mycoplasmoides pneumoniae).